We begin with the raw amino-acid sequence, 207 residues long: Outer-membrane lipoprotein carrier protein (207 aa).

Residues 1–23 form the signal peptide; that stretch reads MMKPHNLFQFLAVCSLTVAVASA.

This sequence belongs to the LolA family. As to quaternary structure, monomer.

Its subcellular location is the periplasm. In terms of biological role, participates in the translocation of lipoproteins from the inner membrane to the outer membrane. Only forms a complex with a lipoprotein if the residue after the N-terminal Cys is not an aspartate (The Asp acts as a targeting signal to indicate that the lipoprotein should stay in the inner membrane). This is Outer-membrane lipoprotein carrier protein from Neisseria gonorrhoeae (strain ATCC 700825 / FA 1090).